We begin with the raw amino-acid sequence, 118 residues long: Histone H2B.N (118 aa).

This sequence belongs to the histone H2B family. The nucleosome is a histone octamer containing two molecules each of H2A, H2B, H3 and H4 assembled in one H3-H4 heterotetramer and two H2A-H2B heterodimers. The octamer wraps approximately 147 bp of DNA. Expressed in germline. Predominantly expressed in oocytes.

The protein localises to the nucleus. It is found in the chromosome. Functionally, core component of nucleosome. Nucleosomes wrap and compact DNA into chromatin, limiting DNA accessibility to the cellular machineries which require DNA as a template. Histones thereby play a central role in transcription regulation, DNA repair, DNA replication and chromosomal stability. DNA accessibility is regulated via a complex set of post-translational modifications of histones, also called histone code, and nucleosome remodeling. The protein is Histone H2B.N of Homo sapiens (Human).